The following is a 1385-amino-acid chain: Formin-like protein 7 (1385 aa).

The 185-residue stretch at 9 to 193 (FKKPPDGLLL…RYVSMRNVVP (185 aa)) folds into the Phosphatase tensin-type domain. Residue C126 is the Phosphocysteine intermediate of the active site. One can recognise a C2 tensin-type domain in the interval 199 to 358 (DRALTLDSVI…KASSTSQGNI (160 aa)). Disordered stretches follow at residues 345-367 (IPQR…DGSE), 427-510 (APSR…LTVN), 649-989 (STAA…PLHW), and 1362-1385 (KRAQ…LLEP). Composition is skewed to polar residues over residues 349 to 358 (KASSTSQGNI), 448 to 470 (TSAS…SPVQ), and 483 to 510 (PAQS…LTVN). Pro residues-rich tracts occupy residues 654-665 (PPLPPPLPPPLK) and 689-701 (TQPP…PPIQ). Over residues 702 to 718 (PTLISNSIYSSTSSVVS) the composition is skewed to low complexity. Pro residues-rich tracts occupy residues 727–758 (PAPP…PPSA), 766–795 (PVPP…PPAA), and 802–815 (AVPP…PPMV). A compositionally biased stretch (low complexity) spans 855–867 (QTSSLVSSLPSSR). 2 stretches are compositionally biased toward pro residues: residues 895–906 (SAPPAPPLPPPK) and 921–932 (WPPPPPPGPPPK). Positions 933-942 (NSSNSLPSKG) are enriched in low complexity. One can recognise an FH2 domain in the interval 974 to 1372 (RPNQSSKRTP…RAQMEAEKEK (399 aa)).

The protein belongs to the formin-like family. Class-II subfamily.

This chain is Formin-like protein 7 (FH7), found in Oryza sativa subsp. japonica (Rice).